Consider the following 483-residue polypeptide: PRAME family member 12 (483 aa).

The stretch at 97–122 (RWKLQVLDLRNVDENFWGIWSGASAL) is one LRR 1; degenerate repeat. One copy of the LRR 2; degenerate repeat lies at 177–201 (HVCCKELQIFGIAIHRIIEVLNTVE). Residues 202–228 (LDCIQEVEVCCPWELSILIRFAPYLGQ) form an LRR 3; degenerate repeat. Residues 229 to 264 (MRNLRKLVLFNIHVSACIPLDRKEQFVIQFTSQFLK) form an LRR 4; degenerate repeat. LRR repeat units lie at residues 265 to 290 (LDYF…LRCL), 291 to 322 (QAPL…RQLK), 323 to 341 (ELDL…PLSV), 347 to 374 (EATL…ALSR), and 375 to 399 (CSQL…LLRH).

The protein belongs to the PRAME family.

The polypeptide is PRAME family member 12 (Homo sapiens (Human)).